Reading from the N-terminus, the 155-residue chain is Small ribosomal subunit protein uS7 (155 aa).

Belongs to the universal ribosomal protein uS7 family. Part of the 30S ribosomal subunit. Contacts proteins S9 and S11.

Its function is as follows. One of the primary rRNA binding proteins, it binds directly to 16S rRNA where it nucleates assembly of the head domain of the 30S subunit. Is located at the subunit interface close to the decoding center, probably blocks exit of the E-site tRNA. This is Small ribosomal subunit protein uS7 from Sulfurovum sp. (strain NBC37-1).